A 76-amino-acid polypeptide reads, in one-letter code: ATP synthase subunit 9, mitochondrial (76 aa).

Transmembrane regions (helical) follow at residues 14–34 (ISTI…AALI) and 56–76 (ALSE…LFAV).

This sequence belongs to the ATPase C chain family. As to quaternary structure, F-type ATPases have 2 components, CF(1) - the catalytic core - and CF(0) - the membrane proton channel. CF(1) has five subunits: alpha(3), beta(3), gamma(1), delta(1), epsilon(1). CF(0) has three main subunits: a, b and c.

It localises to the mitochondrion membrane. In terms of biological role, mitochondrial membrane ATP synthase (F(1)F(0) ATP synthase or Complex V) produces ATP from ADP in the presence of a proton gradient across the membrane which is generated by electron transport complexes of the respiratory chain. F-type ATPases consist of two structural domains, F(1) - containing the extramembraneous catalytic core and F(0) - containing the membrane proton channel, linked together by a central stalk and a peripheral stalk. During catalysis, ATP synthesis in the catalytic domain of F(1) is coupled via a rotary mechanism of the central stalk subunits to proton translocation. Part of the complex F(0) domain. A homomeric c-ring of probably 10 subunits is part of the complex rotary element. This Candida glabrata (strain ATCC 2001 / BCRC 20586 / JCM 3761 / NBRC 0622 / NRRL Y-65 / CBS 138) (Yeast) protein is ATP synthase subunit 9, mitochondrial (ATP9).